An 814-amino-acid polypeptide reads, in one-letter code: Cadherin-15 (814 aa).

The N-terminal stretch at 1 to 21 (MDAAFLLVLGLLAQSLCLSLG) is a signal peptide. A propeptide spanning residues 22 to 60 (VPGWRRPTTLYPWRRAPALSRVRRAWVIPPISVSENHKR) is cleaved from the precursor. Cadherin domains follow at residues 61–152 (LPYP…RPAF), 153–260 (LQEA…APEF), 261–375 (TRDE…PPVF), 376–481 (QENP…DHAP), and 482–590 (VLAP…VCLP). Residues 61–606 (LPYPLVQIKS…AGGTGLSLGA (546 aa)) lie on the Extracellular side of the membrane. N227 carries N-linked (GlcNAc...) asparagine glycosylation. N-linked (GlcNAc...) asparagine glycosylation is found at N531, N538, and N576. A helical transmembrane segment spans residues 607–626 (LVIVLASALLLLVLVLLVAL). The Cytoplasmic segment spans residues 627 to 814 (RARFWKQSRG…LLPRHRGRTA (188 aa)). Disordered regions lie at residues 636 to 663 (GKGLLHGPQDDLRDNVLNYDEQGGGEED) and 676 to 703 (TALSLPLGPPPLRRDAPQGRLHPQPPRV).

In terms of tissue distribution, expressed in the brain and cerebellum.

It is found in the cell membrane. In terms of biological role, cadherins are calcium-dependent cell adhesion proteins. They preferentially interact with themselves in a homophilic manner in connecting cells; cadherins may thus contribute to the sorting of heterogeneous cell types. M-cadherin is part of the myogenic program and may provide a trigger for terminal muscle differentiation. This chain is Cadherin-15 (CDH15), found in Homo sapiens (Human).